The primary structure comprises 64 residues: Large ribosomal subunit protein bL35 (64 aa).

Over residues 1–42 the composition is skewed to basic residues; the sequence is MPKAKTHSGASKRFRRTGTGKIVRQKANRRHLLEHKPTKRTR. A disordered region spans residues 1-64; it reads MPKAKTHSGA…NSRINKLLNG (64 aa). The span at 48 to 58 shows a compositional bias: polar residues; sequence TTVSAADNSRI.

It belongs to the bacterial ribosomal protein bL35 family.

The sequence is that of Large ribosomal subunit protein bL35 from Mycolicibacterium smegmatis (strain ATCC 700084 / mc(2)155) (Mycobacterium smegmatis).